Consider the following 651-residue polypeptide: DNA mismatch repair protein MutL (651 aa).

Residues 383 to 405 (TAAEEPTPAPTSPDLEIGDLDDQ) form a disordered region.

This sequence belongs to the DNA mismatch repair MutL/HexB family.

This protein is involved in the repair of mismatches in DNA. It is required for dam-dependent methyl-directed DNA mismatch repair. May act as a 'molecular matchmaker', a protein that promotes the formation of a stable complex between two or more DNA-binding proteins in an ATP-dependent manner without itself being part of a final effector complex. This chain is DNA mismatch repair protein MutL, found in Lacticaseibacillus paracasei (strain ATCC 334 / BCRC 17002 / CCUG 31169 / CIP 107868 / KCTC 3260 / NRRL B-441) (Lactobacillus paracasei).